The following is a 113-amino-acid chain: Large ribosomal subunit protein uL24 (113 aa).

This sequence belongs to the universal ribosomal protein uL24 family. In terms of assembly, part of the 50S ribosomal subunit.

Its function is as follows. One of two assembly initiator proteins, it binds directly to the 5'-end of the 23S rRNA, where it nucleates assembly of the 50S subunit. Functionally, one of the proteins that surrounds the polypeptide exit tunnel on the outside of the subunit. The protein is Large ribosomal subunit protein uL24 of Micrococcus luteus (Micrococcus lysodeikticus).